We begin with the raw amino-acid sequence, 627 residues long: Protein zyg-11 homolog A (627 aa).

3 LRR repeats span residues 123-146 (LPNL…LSCK), 203-227 (LPNL…SFLQ), and 409-432 (ITSI…LIMA).

This sequence belongs to the zyg-11 family.

Functionally, probably acts as a target recruitment subunit in an E3 ubiquitin ligase complex ZYGA-CUL2-elongin BC. The polypeptide is Protein zyg-11 homolog A (Zyg11a) (Mus musculus (Mouse)).